A 321-amino-acid polypeptide reads, in one-letter code: Basic peroxidase (321 aa).

The signal sequence occupies residues 1–30 (MSYHKSSGTILMVPLFMLLISVNYFMSCNA). Q31 is subject to Pyrrolidone carboxylic acid. 4 disulfide bridges follow: C41-C117, C74-C79, C123-C317, and C202-C228. The active-site Proton acceptor is H72. 5 residues coordinate Ca(2+): D73, V76, G78, D80, and S82. P165 is a substrate binding site. Residue H195 coordinates heme b. T196 serves as a coordination point for Ca(2+). N-linked (GlcNAc...) asparagine glycans are attached at residues N211 and N221. Residues D241, T244, and D249 each coordinate Ca(2+).

It belongs to the peroxidase family. Classical plant (class III) peroxidase subfamily. Heme b serves as cofactor. Ca(2+) is required as a cofactor. Post-translationally, N-glycosylated. In terms of tissue distribution, expressed in tracheary elements, roots, young and old hypocotyls, and stems in the partially glycosylated form and in roots and young hypocotyls in the fully glycosylated form. None of the isoforms is significantly expressed in leaves or cotyledons.

It is found in the secreted. The enzyme catalyses 2 a phenolic donor + H2O2 = 2 a phenolic radical donor + 2 H2O. Its function is as follows. Removal of H(2)O(2), oxidation of toxic reductants, biosynthesis and degradation of lignin, suberization, auxin catabolism, response to environmental stresses such as wounding, pathogen attack and oxidative stress. These functions might be dependent on each isozyme/isoform in each plant tissue. Involved in the synthesis of highly polymerized lignins. The sequence is that of Basic peroxidase (POD1) from Zinnia elegans (Garden zinnia).